The following is a 78-amino-acid chain: U7-lycotoxin-Ls1d (78 aa).

The N-terminal stretch at 1–22 (MKLIIFTGLALLLIVSLIDVEA) is a signal peptide. Residues 23 to 26 (QNEG) constitute a propeptide that is removed on maturation.

The protein belongs to the neurotoxin 19 (CSTX) family. 07 (U7-Lctx) subfamily. Post-translationally, contains 4 disulfide bonds. As to expression, expressed by the venom gland.

Its subcellular location is the secreted. This Lycosa singoriensis (Wolf spider) protein is U7-lycotoxin-Ls1d.